The primary structure comprises 193 residues: Xanthine phosphoribosyltransferase (193 aa).

2 residues coordinate xanthine: leucine 20 and threonine 27. A 5-phospho-alpha-D-ribose 1-diphosphate-binding site is contributed by 128 to 132 (ANGQA). Lysine 156 contacts xanthine.

This sequence belongs to the purine/pyrimidine phosphoribosyltransferase family. Xpt subfamily. As to quaternary structure, homodimer.

It is found in the cytoplasm. The catalysed reaction is XMP + diphosphate = xanthine + 5-phospho-alpha-D-ribose 1-diphosphate. Its pathway is purine metabolism; XMP biosynthesis via salvage pathway; XMP from xanthine: step 1/1. Its function is as follows. Converts the preformed base xanthine, a product of nucleic acid breakdown, to xanthosine 5'-monophosphate (XMP), so it can be reused for RNA or DNA synthesis. This Streptococcus pneumoniae serotype 4 (strain ATCC BAA-334 / TIGR4) protein is Xanthine phosphoribosyltransferase.